Consider the following 302-residue polypeptide: MSKPDVAQVKAFLLQLQDEICRSLEQADGVGRFVEDAWAREGGGGGRTRVMRHGDMIEQGGVNFSHVYGDAMPASATAHRPELAGRKFEAMGVSLVIHPHNPYVPTSHANVRFFIAEKEGEEPIWWFGGGFDLTPFYPFAEDVQHWHRVSRDLCQPFGEDIYPEFKSWCDRYFFLKHRNETRGVGGLFFDDLNRWPFADCFAFMQAVGRGYLDAYLPIIERRKAQPYGEREREFQLYRRGRYVEFNLVYDRGTLFGLQTGGRTESILMSMPPLARWEYDWQPEAGSPEALLYTDYLAPREWL.

Residue S94 participates in substrate binding. A divalent metal cation is bound by residues H98 and H108. Catalysis depends on H108, which acts as the Proton donor. 110-112 is a substrate binding site; it reads NVR. 2 residues coordinate a divalent metal cation: H147 and H177. Positions 242-277 are important for dimerization; that stretch reads YVEFNLVYDRGTLFGLQTGGRTESILMSMPPLARWE. Residue 260 to 262 coordinates substrate; the sequence is GGR.

It belongs to the aerobic coproporphyrinogen-III oxidase family. As to quaternary structure, homodimer. The cofactor is a divalent metal cation.

It is found in the cytoplasm. It carries out the reaction coproporphyrinogen III + O2 + 2 H(+) = protoporphyrinogen IX + 2 CO2 + 2 H2O. Its pathway is porphyrin-containing compound metabolism; protoporphyrin-IX biosynthesis; protoporphyrinogen-IX from coproporphyrinogen-III (O2 route): step 1/1. Its function is as follows. Involved in the heme biosynthesis. Catalyzes the aerobic oxidative decarboxylation of propionate groups of rings A and B of coproporphyrinogen-III to yield the vinyl groups in protoporphyrinogen-IX. In Aeromonas salmonicida (strain A449), this protein is Oxygen-dependent coproporphyrinogen-III oxidase.